The primary structure comprises 671 residues: ATP-dependent zinc metalloprotease FtsH (671 aa).

The Cytoplasmic portion of the chain corresponds to 1-22; that stretch reads MANPNNNNDNKQNNNNNFFNDN. The helical transmembrane segment at 23 to 43 threads the bilayer; it reads PLLAFAIFSIVIILIFKSFVG. The Periplasmic segment spans residues 44 to 130; it reads EGESLGTMMN…ISYEGVVGNG (87 aa). A helical membrane pass occupies residues 131-151; the sequence is FFSELISMMLPILIFFAIWIF. Over 152-671 the chain is Cytoplasmic; it reads LAKKMSKGMG…SEESDNNKEA (520 aa). 224-231 lines the ATP pocket; that stretch reads GPPGTGKT. His-447 is a Zn(2+) binding site. Glu-448 is a catalytic residue. His-451 and Asp-525 together coordinate Zn(2+). Residues 630–671 are disordered; it reads EKGMPSRLAHKDKVAKNKAEADKKEEALKKEISEESDNNKEA.

This sequence in the central section; belongs to the AAA ATPase family. The protein in the C-terminal section; belongs to the peptidase M41 family. In terms of assembly, homohexamer. It depends on Zn(2+) as a cofactor.

Its subcellular location is the cell inner membrane. Acts as a processive, ATP-dependent zinc metallopeptidase for both cytoplasmic and membrane proteins. Plays a role in the quality control of integral membrane proteins. The sequence is that of ATP-dependent zinc metalloprotease FtsH from Sulfurovum sp. (strain NBC37-1).